The primary structure comprises 248 residues: Mitochondrial import inner membrane translocase subunit Tim21 (248 aa).

Residues methionine 1–serine 18 constitute a mitochondrion transit peptide. Residues threonine 67–serine 98 form a disordered region. Residues phenylalanine 108 to isoleucine 128 form a helical membrane-spanning segment.

It belongs to the TIM21 family. Component of the TIM23 complex. Component of the MITRAC (mitochondrial translation regulation assembly intermediate of cytochrome c oxidase complex) complex, the core components of this complex being COA3/MITRAC12 and COX14. Interacts with COA3 and MT-CO1/COX1.

It is found in the mitochondrion membrane. In terms of biological role, participates in the translocation of transit peptide-containing proteins across the mitochondrial inner membrane. Also required for assembly of mitochondrial respiratory chain complex I and complex IV as component of the MITRAC (mitochondrial translation regulation assembly intermediate of cytochrome c oxidase complex) complex. Probably shuttles between the presequence translocase and respiratory-chain assembly intermediates in a process that promotes incorporation of early nuclear-encoded subunits into these complexes. The sequence is that of Mitochondrial import inner membrane translocase subunit Tim21 (TIMM21) from Homo sapiens (Human).